The sequence spans 592 residues: Aspartate--tRNA ligase (592 aa).

L-aspartate is bound at residue glutamate 177. An aspartate region spans residues 201 to 204 (QIFK). Residue arginine 223 participates in L-aspartate binding. Residues 223–225 (RDE) and glutamine 232 contribute to the ATP site. Histidine 451 lines the L-aspartate pocket. Position 485 (glutamate 485) interacts with ATP. Arginine 492 provides a ligand contact to L-aspartate. 537 to 540 (GLDR) provides a ligand contact to ATP.

This sequence belongs to the class-II aminoacyl-tRNA synthetase family. Type 1 subfamily. Homodimer.

Its subcellular location is the cytoplasm. The enzyme catalyses tRNA(Asp) + L-aspartate + ATP = L-aspartyl-tRNA(Asp) + AMP + diphosphate. In terms of biological role, catalyzes the attachment of L-aspartate to tRNA(Asp) in a two-step reaction: L-aspartate is first activated by ATP to form Asp-AMP and then transferred to the acceptor end of tRNA(Asp). The sequence is that of Aspartate--tRNA ligase from Bacillus licheniformis (strain ATCC 14580 / DSM 13 / JCM 2505 / CCUG 7422 / NBRC 12200 / NCIMB 9375 / NCTC 10341 / NRRL NRS-1264 / Gibson 46).